Reading from the N-terminus, the 45-residue chain is Major cold shock protein (45 aa).

The region spanning 1 to 45 (EKGFGFISTENGQDVFAHFSAIQTNGFKTLEEGQKVAFDVEEGQR) is the CSD domain.

As to quaternary structure, homodimer.

It localises to the cytoplasm. The polypeptide is Major cold shock protein (cspA) (Streptococcus pyogenes).